The following is a 259-amino-acid chain: Glutamate 5-kinase (259 aa).

Position 18 (lysine 18) interacts with ATP. 3 residues coordinate substrate: serine 54, aspartate 141, and asparagine 153. An ATP-binding site is contributed by serine 173 to aspartate 174.

It belongs to the glutamate 5-kinase family.

It localises to the cytoplasm. The catalysed reaction is L-glutamate + ATP = L-glutamyl 5-phosphate + ADP. It participates in amino-acid biosynthesis; L-proline biosynthesis; L-glutamate 5-semialdehyde from L-glutamate: step 1/2. In terms of biological role, catalyzes the transfer of a phosphate group to glutamate to form L-glutamate 5-phosphate. This is Glutamate 5-kinase from Clavibacter michiganensis subsp. michiganensis (strain NCPPB 382).